The primary structure comprises 1289 residues: uncharacterized protein (1289 aa).

The 119-residue stretch at 615–733 folds into the MHD1 domain; it reads LDMYDVLKEL…DGMLSYSAQL (119 aa). The segment at 745-774 is disordered; sequence DEPSYSLESSDTRSSLSLNNANVNHEKSRS. Residues 748–762 show a composition bias toward low complexity; that stretch reads SYSLESSDTRSSLSL. The 133-residue stretch at 834-966 folds into the C2 domain; sequence AQYHSSHNLE…DDGFPIDFSL (133 aa). The MHD2 domain occupies 1044–1184; that stretch reads YDAILPLFDY…KSVSELKDEV (141 aa).

It is found in the cytoplasm. This is an uncharacterized protein from Saccharomyces cerevisiae (strain ATCC 204508 / S288c) (Baker's yeast).